Here is a 484-residue protein sequence, read N- to C-terminus: tRNA-2-methylthio-N(6)-dimethylallyladenosine synthase (484 aa).

The MTTase N-terminal domain occupies 29 to 149; that stretch reads GVFHIHTLGC…LPKLLDQNRA (121 aa). Positions 38, 78, 112, 186, 190, and 193 each coordinate [4Fe-4S] cluster. Residues 172–401 enclose the Radical SAM core domain; the sequence is RASRISSWVA…VALQEQITEE (230 aa). A TRAM domain is found at 404 to 474; that stretch reads ATFEGRDVEV…RHNLLADPDV (71 aa).

The protein belongs to the methylthiotransferase family. MiaB subfamily. In terms of assembly, monomer. The cofactor is [4Fe-4S] cluster.

It localises to the cytoplasm. It carries out the reaction N(6)-dimethylallyladenosine(37) in tRNA + (sulfur carrier)-SH + AH2 + 2 S-adenosyl-L-methionine = 2-methylsulfanyl-N(6)-dimethylallyladenosine(37) in tRNA + (sulfur carrier)-H + 5'-deoxyadenosine + L-methionine + A + S-adenosyl-L-homocysteine + 2 H(+). Functionally, catalyzes the methylthiolation of N6-(dimethylallyl)adenosine (i(6)A), leading to the formation of 2-methylthio-N6-(dimethylallyl)adenosine (ms(2)i(6)A) at position 37 in tRNAs that read codons beginning with uridine. This chain is tRNA-2-methylthio-N(6)-dimethylallyladenosine synthase, found in Bifidobacterium longum (strain DJO10A).